A 370-amino-acid chain; its full sequence is tRNA-specific 2-thiouridylase MnmA (370 aa).

ATP contacts are provided by residues 9 to 16 (GISGGVDS) and M35. Residues 107-109 (NPD) form an interaction with target base in tRNA region. C112 functions as the Nucleophile in the catalytic mechanism. Residues C112 and C209 are joined by a disulfide bond. G137 contacts ATP. An interaction with tRNA region spans residues 159–161 (KDQ). C209 acts as the Cysteine persulfide intermediate in catalysis.

This sequence belongs to the MnmA/TRMU family.

Its subcellular location is the cytoplasm. It catalyses the reaction S-sulfanyl-L-cysteinyl-[protein] + uridine(34) in tRNA + AH2 + ATP = 2-thiouridine(34) in tRNA + L-cysteinyl-[protein] + A + AMP + diphosphate + H(+). Functionally, catalyzes the 2-thiolation of uridine at the wobble position (U34) of tRNA, leading to the formation of s(2)U34. In Mycoplasma pneumoniae (strain ATCC 29342 / M129 / Subtype 1) (Mycoplasmoides pneumoniae), this protein is tRNA-specific 2-thiouridylase MnmA.